The sequence spans 156 residues: ATP synthase subunit b (156 aa).

The chain crosses the membrane as a helical span at residues 7–27 (LFAQIIVFFGLVWFTMKFVWP).

The protein belongs to the ATPase B chain family. In terms of assembly, F-type ATPases have 2 components, F(1) - the catalytic core - and F(0) - the membrane proton channel. F(1) has five subunits: alpha(3), beta(3), gamma(1), delta(1), epsilon(1). F(0) has three main subunits: a(1), b(2) and c(10-14). The alpha and beta chains form an alternating ring which encloses part of the gamma chain. F(1) is attached to F(0) by a central stalk formed by the gamma and epsilon chains, while a peripheral stalk is formed by the delta and b chains.

It localises to the cell inner membrane. In terms of biological role, f(1)F(0) ATP synthase produces ATP from ADP in the presence of a proton or sodium gradient. F-type ATPases consist of two structural domains, F(1) containing the extramembraneous catalytic core and F(0) containing the membrane proton channel, linked together by a central stalk and a peripheral stalk. During catalysis, ATP synthesis in the catalytic domain of F(1) is coupled via a rotary mechanism of the central stalk subunits to proton translocation. Its function is as follows. Component of the F(0) channel, it forms part of the peripheral stalk, linking F(1) to F(0). The chain is ATP synthase subunit b from Neisseria meningitidis serogroup C (strain 053442).